A 308-amino-acid polypeptide reads, in one-letter code: MAWAMDNAILETILQRVRPLIGQGKVADYIPALASVEGSKLGIAICTVDGQHYQAGDAHERFSIQSISKVLSLVVAMRHYPEEEIWQRVGKDPSGSPFNSLVQLEMEQGIPRNPFINAGALVVCDMLQGRLSAPRQRMLEVVRALCGVSDITYDATVARSEFEHSARNAAIAWLMKSFGNFHHDVPTVLQNYFHYCALKMSCMELARTFVFLANQGEAFHLDEPVVTPMQARQINALMATSGMYQNAGEFAWRVGLPAKSGVGGGIVAIVPHEMAIAVWSPELDPAGNSLAGIAALEQLTQTLGRSVY.

Substrate-binding residues include S66, N117, E161, N168, Y192, Y244, and V262.

The protein belongs to the glutaminase family. Homotetramer.

It carries out the reaction L-glutamine + H2O = L-glutamate + NH4(+). The protein is Glutaminase of Salmonella choleraesuis (strain SC-B67).